We begin with the raw amino-acid sequence, 929 residues long: Pyruvate dehydrogenase E1 component (929 aa).

Residue Lys375 forms an Isoglutamyl lysine isopeptide (Lys-Gln) (interchain with Q-Cter in protein Pup) linkage.

As to quaternary structure, homodimer. Part of the PDH complex, consisting of multiple copies of AceE (E1), DlaT (E2) and Lpd (E3). Mg(2+) serves as cofactor. It depends on thiamine diphosphate as a cofactor.

The enzyme catalyses N(6)-[(R)-lipoyl]-L-lysyl-[protein] + pyruvate + H(+) = N(6)-[(R)-S(8)-acetyldihydrolipoyl]-L-lysyl-[protein] + CO2. Functionally, component of the pyruvate dehydrogenase (PDH) complex, that catalyzes the overall conversion of pyruvate to acetyl-CoA and CO(2). AceE has reductase activity with pyruvate but does not react with 2-oxoglutarate. The sequence is that of Pyruvate dehydrogenase E1 component (aceE) from Mycolicibacterium smegmatis (strain ATCC 700084 / mc(2)155) (Mycobacterium smegmatis).